We begin with the raw amino-acid sequence, 1049 residues long: Ataxin-2-like protein (1049 aa).

Met1 is modified (N-acetylmethionine). Residues 1–54 are disordered; sequence MLKPQPPQQTSQPQQPPPTQQAVARRSPGGTSPPNGGLPGPLTATAAPPGPPAA. Ser27 is modified (phosphoserine). Thr45 is subject to Phosphothreonine. Residues 96 to 119 are interaction with MPL; the sequence is SVRGQTTGKGPPQSPVFEGVYNNS. Ser109 is modified (phosphoserine). At Tyr116 the chain carries Phosphotyrosine. The Sm domain maps to 120-197; that stretch reads RMLHFLTAVV…VLLVHFRNVD (78 aa). N6-acetyllysine is present on Lys205. The residue at position 236 (Ser236) is a Phosphoserine. Residue Tyr262 is modified to Phosphotyrosine. Phosphoserine is present on Ser304. Phosphotyrosine is present on Tyr307. Residues 314-326 show a composition bias toward basic and acidic residues; it reads ENDDGRTEEEKHS. Disordered stretches follow at residues 314 to 522, 554 to 573, 578 to 704, 736 to 772, 824 to 852, 868 to 944, and 999 to 1049; these read ENDD…RNLE, QFKL…FPSR, EAKG…LTAG, VSNS…PMMQ, SNPR…AEQP, HATQ…SSFP, and PQGH…PPGN. Positions 328–340 are enriched in polar residues; it reads VQRQGSGRESPSL. Residues Ser333 and Ser337 each carry the phosphoserine modification. Lys346 participates in a covalent cross-link: Glycyl lysine isopeptide (Lys-Gly) (interchain with G-Cter in SUMO2). Tyr347 is modified (phosphotyrosine). Arg359 carries the post-translational modification Asymmetric dimethylarginine. Low complexity predominate over residues 361–378; the sequence is GVRCSSSRGGRPGLSSLP. A phosphoserine mark is found at Ser389, Ser407, and Ser453. The segment covering 454–466 has biased composition (low complexity); it reads PKSAAPAPVSASC. A compositionally biased stretch (polar residues) spans 475–487; sequence VASSASIPVTSSV. Residues Ser496 and Ser499 each carry the phosphoserine modification. A compositionally biased stretch (basic and acidic residues) spans 508–519; it reads DVKELPTKEPSR. 3 positions are modified to phosphoserine: Ser560, Ser561, and Ser562. The span at 578-587 shows a compositional bias: basic and acidic residues; the sequence is EAKGKEKEVD. A Phosphoserine modification is found at Ser597. Thr635 is subject to Phosphothreonine. Ser637, Ser677, Ser683, and Ser687 each carry phosphoserine. The span at 681-697 shows a compositional bias: low complexity; the sequence is STSTPTSPGPRTHSTPS. Polar residues-rich tracts occupy residues 824 to 845 and 878 to 902; these read SNPR…STPQ and QPAT…QHQA. Residues 935-944 show a composition bias toward low complexity; it reads SAQSPQSSFP. A compositionally biased stretch (polar residues) spans 1033–1042; it reads QVQSHPSQQL.

The protein belongs to the ataxin-2 family. As to quaternary structure, interacts with MPL/TPOR and EPOR and dissociates after ligand stimulation. Interacts with DDX6, G3BP, and ATXN2. Interacts with PRMT1. Interacts with CIC and ATXN1. Post-translationally, thrombopoietin triggers the phosphorylation on tyrosine residues in a way that is dependent on MPL C-terminal domain. In terms of processing, asymmetrically dimethylated. Probably methylated by PRMT1. As to expression, expressed in cerebellum.

The protein resides in the membrane. The protein localises to the cytoplasm. It localises to the nucleus speckle. It is found in the cytoplasmic granule. Its function is as follows. Involved in the regulation of stress granule and P-body formation. This Mus musculus (Mouse) protein is Ataxin-2-like protein (Atxn2l).